The sequence spans 93 residues: Alpha-defensin 24 (93 aa).

An N-terminal signal peptide occupies residues 1–19 (MKTLILLSALVLLAFQVQA). A propeptide spanning residues 20 to 58 (DPIQNTDEETKTEEQPGEEDQAVSVSFGDPEGASLQEES) is cleaved from the precursor. Residues 23–54 (QNTDEETKTEEQPGEEDQAVSVSFGDPEGASL) are disordered. 3 cysteine pairs are disulfide-bonded: Cys-64–Cys-92, Cys-66–Cys-81, and Cys-71–Cys-91.

Belongs to the alpha-defensin family.

The protein resides in the secreted. In terms of biological role, may have microbicidal activities. This is Alpha-defensin 24 (Defa24) from Mus musculus (Mouse).